The primary structure comprises 1144 residues: Formin-like protein 18 (1144 aa).

In terms of domain architecture, Phosphatase tensin-type spans 17–193; sequence LEISERVYVF…QYISRRNVGS (177 aa). Cysteine 126 serves as the catalytic Phosphocysteine intermediate. In terms of domain architecture, C2 tensin-type spans 199–338; sequence DQALTLDCVN…FSAEVIFSEM (140 aa). Disordered regions lie at residues 429–463 and 482–729; these read ISENIVSSPDTSSPEKEKDTMSSHKSYADPNSILK and KIFS…KGRG. Residues 441–450 are compositionally biased toward basic and acidic residues; that stretch reads SPEKEKDTMS. Residues 491 to 522 show a composition bias toward polar residues; sequence SPVTSPLPNRSPTQGSPASISRFHSSPSSLGI. Residues 526-536 show a composition bias toward basic and acidic residues; that stretch reads LHDHGSCKDEE. Residues 538 to 548 show a composition bias toward low complexity; the sequence is TSSSPASPSIS. Residues 555-580 show a composition bias toward polar residues; it reads PLTSSQPKKASPQCPQSPTPVHSNGP. The span at 603–613 shows a compositional bias: pro residues; that stretch reads RPPPPPPPPPI. Positions 614-629 are enriched in low complexity; that stretch reads SSLRSTPSPSSTSNSI. A compositionally biased stretch (pro residues) spans 633-643; the sequence is GPPPPPPPPPL. Residues 644 to 653 are compositionally biased toward low complexity; that stretch reads QSHRSALSSS. Pro residues predominate over residues 669-678; the sequence is NPPPPPPPPL. The segment covering 679–695 has biased composition (low complexity); it reads HSNSRMGAPTSSLVLKS. The segment covering 696–705 has biased composition (pro residues); sequence PPVPPPPAPA. In terms of domain architecture, FH2 spans 735–1135; the sequence is KGQGQTRKAN…RAQKEAENEK (401 aa).

This sequence belongs to the formin-like family. Class-II subfamily.

This chain is Formin-like protein 18 (FH18), found in Arabidopsis thaliana (Mouse-ear cress).